A 131-amino-acid chain; its full sequence is Large ribosomal subunit protein bL17 (131 aa).

The protein belongs to the bacterial ribosomal protein bL17 family. Part of the 50S ribosomal subunit. Contacts protein L32.

The protein is Large ribosomal subunit protein bL17 of Thermotoga sp. (strain RQ2).